The following is a 594-amino-acid chain: Solute carrier family 22 member 14 (594 aa).

Over 1–70 the chain is Cytoplasmic; the sequence is MAGEENFKEE…EFGTFQQRLV (70 aa). The chain crosses the membrane as a helical span at residues 71–91; that stretch reads ALTFIPSIMSAFFMFADHFVF. The Extracellular portion of the chain corresponds to 92 to 184; sequence TAQKPYCNTS…LVCGMETKKD (93 aa). N-linked (GlcNAc...) asparagine glycans are attached at residues N99, N117, N125, and N150. Residues 185–205 traverse the membrane as a helical segment; the sequence is TAQIMFMAGLPIGSLIFRLIT. Over 206–210 the chain is Cytoplasmic; sequence DKMGR. The helical transmembrane segment at 211–231 threads the bilayer; that stretch reads YPAILLSLLGLIIFGFGTAFM. Over 232 to 235 the chain is Extracellular; that stretch reads NSFH. Residues 236–256 form a helical membrane-spanning segment; it reads LYLFFRFGISQSVVGYAISSI. Over 257–270 the chain is Cytoplasmic; sequence SLATEWLVGEHRAH. The helical transmembrane segment at 271–291 threads the bilayer; sequence AIILGHCFFAVGAVLLTGIAY. Topologically, residues 292–297 are extracellular; sequence SLPHWQ. The chain crosses the membrane as a helical span at residues 298 to 318; the sequence is LLFLVGGILVIPFISYIWILP. The Cytoplasmic portion of the chain corresponds to 319-379; that stretch reads ESPRWLMMKG…DFCKNRQLCK (61 aa). A helical transmembrane segment spans residues 380 to 400; the sequence is VTLVMSCVWFTVSYTYFTLSL. Over 401–408 the chain is Extracellular; it reads RMRELGVS. A helical membrane pass occupies residues 409-431; that stretch reads VHFRHVVPSIMEVPARLCCIFLL. Topologically, residues 432-437 are cytoplasmic; sequence QQIGRK. Residues 438–458 form a helical membrane-spanning segment; the sequence is WSLAVTLLQAIIWCLLLLFLP. At 459 to 488 the chain is on the extracellular side; sequence EGEDGLRLKWPRCPATELKSMTILVLMLRE. The helical transmembrane segment at 489-509 threads the bilayer; the sequence is FSLAATVTVFFLYTAELLPTV. The Cytoplasmic portion of the chain corresponds to 510–512; that stretch reads LRA. A helical transmembrane segment spans residues 513–533; that stretch reads TGLGLVSLASVAGAILSLTII. Topologically, residues 534–538 are extracellular; it reads SQTPS. The chain crosses the membrane as a helical span at residues 539–559; the sequence is LLPIFLCCVLAIVAFSLSSLL. Topologically, residues 560 to 594 are cytoplasmic; the sequence is PETRDQPLSESLNHSSQIRNKVKDMKTKETSSDDV. The segment at 566–594 is disordered; sequence PLSESLNHSSQIRNKVKDMKTKETSSDDV. Over residues 567–578 the composition is skewed to polar residues; it reads LSESLNHSSQIR. Basic and acidic residues predominate over residues 580 to 594; the sequence is KVKDMKTKETSSDDV.

It belongs to the major facilitator (TC 2.A.1) superfamily. Organic cation transporter (TC 2.A.1.19) family. As to expression, ubiquitous.

The protein localises to the mitochondrion inner membrane. It is found in the cell projection. It localises to the cilium. The protein resides in the flagellum membrane. It carries out the reaction riboflavin(in) = riboflavin(out). Functionally, riboflavin transporter localized at the inner mitochondrial membrane of the spermatozoa midpiece, which is required for male fertility. SLC22A14-mediated riboflavin transport is essential for spermatozoa energy generation and motility: riboflavin is the precursor of FMN and FAD, which are coenzymes of many enzymes in the TCA cycle (the citric acid cycle) in mitochondria. Required for sperm motility and normal sperm flagellar structure. In Homo sapiens (Human), this protein is Solute carrier family 22 member 14.